A 64-amino-acid polypeptide reads, in one-letter code: Ferredoxin-2 (64 aa).

4Fe-4S ferredoxin-type domains lie at 3-31 and 34-64; these read KYLYLDQDECMACESCVELCPEAFRMSSA and YAEVIDPNTTAECVEDAISTCPVECIEWREE. C12, C15, C18, and C54 together coordinate [4Fe-4S] cluster.

As to quaternary structure, homodimer. The cofactor is [4Fe-4S] cluster.

Its function is as follows. Ferredoxins are iron-sulfur proteins that transfer electrons in a wide variety of metabolic reactions. This is Ferredoxin-2 from Nitratidesulfovibrio vulgaris (strain DSM 19637 / Miyazaki F) (Desulfovibrio vulgaris).